The following is a 537-amino-acid chain: Cytochrome P450 734A5 (537 aa).

A helical transmembrane segment spans residues 13 to 33 (GAAAVAVAAAAAWVAVYAAAA). C480 is a binding site for heme.

The protein belongs to the cytochrome P450 family. Heme is required as a cofactor. As to expression, exclusively expressed in roots.

It localises to the membrane. Functionally, cytochrome P450 probably involved in brassinosteroids (BRs) inactivation and regulation of BRs homeostasis. This chain is Cytochrome P450 734A5 (CYP734A5), found in Oryza sativa subsp. japonica (Rice).